We begin with the raw amino-acid sequence, 131 residues long: Holo-[acyl-carrier-protein] synthase (131 aa).

Mg(2+)-binding residues include Asp8 and Glu59.

The protein belongs to the P-Pant transferase superfamily. AcpS family. Requires Mg(2+) as cofactor.

The protein localises to the cytoplasm. It carries out the reaction apo-[ACP] + CoA = holo-[ACP] + adenosine 3',5'-bisphosphate + H(+). Its function is as follows. Transfers the 4'-phosphopantetheine moiety from coenzyme A to a Ser of acyl-carrier-protein. This Orientia tsutsugamushi (strain Boryong) (Rickettsia tsutsugamushi) protein is Holo-[acyl-carrier-protein] synthase.